Here is a 490-residue protein sequence, read N- to C-terminus: RNA-binding protein P (490 aa).

The disordered stretch occupies residues 1–112; it reads MGKKRKLDSK…EEEEAAERDA (112 aa). A compositionally biased stretch (low complexity) spans 13–36; it reads AAARSAAARAAAAAAAAAAAAAVA. The segment covering 74–108 has biased composition (acidic residues); sequence GGEEEEVEEVEVEEEVEVDEDEDGEGEGEEEEEAA. RRM domains follow at residues 156–233 and 267–343; these read RKIF…LASV and RKIF…QKAI.

As to quaternary structure, forms homodimers. Interacts with RBP-L and RBP-208. Interacts with NSF.

The protein resides in the nucleus. Its subcellular location is the cytoplasm. In terms of biological role, RNA-binding protein that binds to a cis-localization element or zipcode, within the 5'-CDS of prolamine RNA. Binds strongly to glutelin mRNA, particularly to 3'-UTR and zipcode RNA. Recognizes and binds to glutelin zipcode RNA, which is required for proper mRNA localization to cisternal endoplasmic reticulum. Exhibits strong binding activity to a glutelin intron sequence and may participate in mRNA splicing. Required for the correct localization of glutelin and prolamine mRNA in endosperm cells during grain development. RBP-P and RBP-L form a quaternary complex with the membrane trafficking factors NSF and RAB5A. This quaternay complex carries glutelin mRNAs for active transport on endosomes to the cortical endoplasmic reticulum membrane, and enables endosome-mediated glutelin mRNA transport in endosperm cells. This chain is RNA-binding protein P, found in Oryza sativa subsp. japonica (Rice).